A 251-amino-acid chain; its full sequence is 3-dehydroquinate dehydratase (251 aa).

3-dehydroquinate contacts are provided by residues Glu-47–Arg-49 and Arg-83. His-144 serves as the catalytic Proton donor/acceptor. The active-site Schiff-base intermediate with substrate is the Lys-171. Residues Arg-214, Ser-233, and Gln-237 each contribute to the 3-dehydroquinate site.

The protein belongs to the type-I 3-dehydroquinase family. Homodimer.

It carries out the reaction 3-dehydroquinate = 3-dehydroshikimate + H2O. Its pathway is metabolic intermediate biosynthesis; chorismate biosynthesis; chorismate from D-erythrose 4-phosphate and phosphoenolpyruvate: step 3/7. Involved in the third step of the chorismate pathway, which leads to the biosynthesis of aromatic amino acids. Catalyzes the cis-dehydration of 3-dehydroquinate (DHQ) and introduces the first double bond of the aromatic ring to yield 3-dehydroshikimate. In Klebsiella pneumoniae subsp. pneumoniae (strain ATCC 700721 / MGH 78578), this protein is 3-dehydroquinate dehydratase.